A 350-amino-acid chain; its full sequence is tRNA N6-adenosine threonylcarbamoyltransferase (350 aa).

Residues H109 and H113 each coordinate Fe cation. Substrate is bound by residues 136–140, D169, G182, D186, and N284; that span reads TVSGG. Fe cation is bound at residue D312.

Belongs to the KAE1 / TsaD family. Requires Fe(2+) as cofactor.

It localises to the cytoplasm. It carries out the reaction L-threonylcarbamoyladenylate + adenosine(37) in tRNA = N(6)-L-threonylcarbamoyladenosine(37) in tRNA + AMP + H(+). In terms of biological role, required for the formation of a threonylcarbamoyl group on adenosine at position 37 (t(6)A37) in tRNAs that read codons beginning with adenine. Is involved in the transfer of the threonylcarbamoyl moiety of threonylcarbamoyl-AMP (TC-AMP) to the N6 group of A37, together with TsaE and TsaB. TsaD likely plays a direct catalytic role in this reaction. This is tRNA N6-adenosine threonylcarbamoyltransferase from Pelodictyon phaeoclathratiforme (strain DSM 5477 / BU-1).